The primary structure comprises 261 residues: tRNA(His) guanylyltransferase (261 aa).

The Mg(2+) site is built by aspartate 29, glycine 30, and aspartate 76. GTP-binding positions include 29 to 34 and 75 to 76; these read DGKGFH and SD.

This sequence belongs to the tRNA(His) guanylyltransferase family. It depends on Mg(2+) as a cofactor.

The catalysed reaction is a 5'-end ribonucleotide-tRNA(His) + GTP + ATP + H2O = a 5'-end phospho-guanosine-ribonucleotide-tRNA(His) + AMP + 2 diphosphate + H(+). In terms of biological role, adds a GMP to the 5'-end of tRNA(His) after transcription and RNase P cleavage. This Schizosaccharomyces pombe (strain 972 / ATCC 24843) (Fission yeast) protein is tRNA(His) guanylyltransferase (thg1).